Reading from the N-terminus, the 490-residue chain is ATP synthase subunit beta, chloroplastic (490 aa).

Residue 170 to 177 coordinates ATP; it reads GGAGVGKT.

The protein belongs to the ATPase alpha/beta chains family. F-type ATPases have 2 components, CF(1) - the catalytic core - and CF(0) - the membrane proton channel. CF(1) has five subunits: alpha(3), beta(3), gamma(1), delta(1), epsilon(1). CF(0) has four main subunits: a(1), b(1), b'(1) and c(9-12).

It is found in the plastid. The protein localises to the chloroplast thylakoid membrane. It carries out the reaction ATP + H2O + 4 H(+)(in) = ADP + phosphate + 5 H(+)(out). Produces ATP from ADP in the presence of a proton gradient across the membrane. The catalytic sites are hosted primarily by the beta subunits. The chain is ATP synthase subunit beta, chloroplastic from Ipomoea obscura (Obscure morning glory).